We begin with the raw amino-acid sequence, 271 residues long: MENICELFDDVILEIMNLLSDTDKINFMFCCSRFYYFIDLVYYNDIYDYYKIQNVSFINKFKKIRYLAVTDTIPSVITHLELDKSFVGSLENCQLPKLSCLKLTQLQYDSFKIYISPAVKIDILKLPTYLKYIDLDYSWDIETYSNSNNVIVKRLRTDFICPVENREGPKCGLMKTSCISTNYYSANYYQYINSQQTQLVTGKHHVPNIQTNKSVKQPIKYSSNTKSTINNIFTNILNNIPKNIPKYTPNNIPKIVPKNTHYRNSSKKYRY.

Residues 4-49 (ICELFDDVILEIMNLLSDTDKINFMFCCSRFYYFIDLVYYNDIYDY) enclose the F-box domain. The disordered stretch occupies residues 251–271 (NIPKIVPKNTHYRNSSKKYRY). A compositionally biased stretch (basic residues) spans 260–271 (THYRNSSKKYRY).

The protein is Putative F-box protein L165 of Acanthamoeba polyphaga mimivirus (APMV).